Consider the following 880-residue polypeptide: Probable receptor-like protein kinase At5g38990 (880 aa).

A signal peptide spans 1–21 (MICHVLVIFTILVSAVVDATA). At 22 to 440 (SYEPTDVFLI…GKGKSSHVLP (419 aa)) the chain is on the extracellular side. N-linked (GlcNAc...) asparagine glycosylation is found at Asn-46, Asn-136, Asn-158, Asn-210, Asn-256, Asn-263, Asn-297, and Asn-324. A helical membrane pass occupies residues 441 to 461 (IIIAVVGSAVALAFFVLVVVL). Residues 462–880 (VVMKRKKKSN…FSEINEPKAR (419 aa)) are Cytoplasmic-facing. Residues 471–505 (NESSVDTTNKPSTNSSWGPLLHGTGSTNTKSASSL) form a disordered region. Composition is skewed to polar residues over residues 472-487 (ESSVDTTNKPSTNSSW) and 494-505 (TGSTNTKSASSL). Residues 525–810 (FEEKLIIGVG…EFALQLHETA (286 aa)) enclose the Protein kinase domain. ATP-binding positions include 531 to 539 (IGVGGFGSV) and Lys-554. Catalysis depends on Asp-653, which acts as the Proton acceptor. The segment at 820–846 (LDLMPSGEVGTTTDGEDDLFSRTTGHV) is disordered.

Belongs to the protein kinase superfamily. Ser/Thr protein kinase family.

Its subcellular location is the membrane. The chain is Probable receptor-like protein kinase At5g38990 from Arabidopsis thaliana (Mouse-ear cress).